A 309-amino-acid polypeptide reads, in one-letter code: Taste receptor type 2 member 31 (309 aa).

The Extracellular segment spans residues 1 to 2 (MT). The helical transmembrane segment at 3-23 (TFIPIIFSSVVVVLFVIGNFA) threads the bilayer. Over 24 to 55 (NGFIALVNSIERVKRQKISFADQILTALAVSR) the chain is Cytoplasmic. A helical membrane pass occupies residues 56–76 (VGLLWVLLLNWYSTVFNPAFY). Residues 77–100 (SVEVRTTAYNVWAVTGHFSNWLAT) lie on the Extracellular side of the membrane. Residues 101–121 (SLSIFYLLKIANFSNLIFLHL) traverse the membrane as a helical segment. Residues 122–126 (KRRVK) lie on the Cytoplasmic side of the membrane. Residues 127-147 (SVILVMLLGPLLFLACQLFVI) form a helical membrane-spanning segment. Over 148-181 (NMKEIVRTKEYEGNLTWKIKLRSAVYLSDATVTT) the chain is Extracellular. N161 carries an N-linked (GlcNAc...) asparagine glycan. Residues 182-202 (LGNLVPFTLTLLCFLLLICSL) traverse the membrane as a helical segment. Topologically, residues 203–229 (CKHLKKMQLHGKGSQDPSTKVHIKALQ) are cytoplasmic. Residues 230–250 (TVIFFLLLCAVYFLSIMISVW) form a helical membrane-spanning segment. Topologically, residues 251-259 (SFGSLENKP) are extracellular. The chain crosses the membrane as a helical span at residues 260–280 (VFMFCKAIRFSYPSIHPFILI). At 281–309 (WGNKKLKQTFLSVLRQVRYWVKGEKPSSP) the chain is on the cytoplasmic side.

The protein belongs to the G-protein coupled receptor T2R family. As to expression, expressed in subsets of taste receptor cells of the tongue and exclusively in gustducin-positive cells.

The protein localises to the membrane. Functionally, receptor that may play a role in the perception of bitterness and is gustducin-linked. May play a role in sensing the chemical composition of the gastrointestinal content. The activity of this receptor may stimulate alpha gustducin, mediate PLC-beta-2 activation and lead to the gating of TRPM5. Activated by the sulfonyl amide sweeteners saccharin and acesulfame K. The chain is Taste receptor type 2 member 31 (TAS2R31) from Homo sapiens (Human).